Here is a 287-residue protein sequence, read N- to C-terminus: Phosphatidylserine decarboxylase proenzyme (287 aa).

Residues Asp-90, His-147, and Ser-253 each act as charge relay system; for autoendoproteolytic cleavage activity in the active site. The active-site Schiff-base intermediate with substrate; via pyruvic acid; for decarboxylase activity is the Ser-253. Ser-253 bears the Pyruvic acid (Ser); by autocatalysis mark.

It belongs to the phosphatidylserine decarboxylase family. PSD-B subfamily. Prokaryotic type I sub-subfamily. As to quaternary structure, heterodimer of a large membrane-associated beta subunit and a small pyruvoyl-containing alpha subunit. Requires pyruvate as cofactor. Post-translationally, is synthesized initially as an inactive proenzyme. Formation of the active enzyme involves a self-maturation process in which the active site pyruvoyl group is generated from an internal serine residue via an autocatalytic post-translational modification. Two non-identical subunits are generated from the proenzyme in this reaction, and the pyruvate is formed at the N-terminus of the alpha chain, which is derived from the carboxyl end of the proenzyme. The autoendoproteolytic cleavage occurs by a canonical serine protease mechanism, in which the side chain hydroxyl group of the serine supplies its oxygen atom to form the C-terminus of the beta chain, while the remainder of the serine residue undergoes an oxidative deamination to produce ammonia and the pyruvoyl prosthetic group on the alpha chain. During this reaction, the Ser that is part of the protease active site of the proenzyme becomes the pyruvoyl prosthetic group, which constitutes an essential element of the active site of the mature decarboxylase.

Its subcellular location is the cell membrane. The enzyme catalyses a 1,2-diacyl-sn-glycero-3-phospho-L-serine + H(+) = a 1,2-diacyl-sn-glycero-3-phosphoethanolamine + CO2. The protein operates within phospholipid metabolism; phosphatidylethanolamine biosynthesis; phosphatidylethanolamine from CDP-diacylglycerol: step 2/2. In terms of biological role, catalyzes the formation of phosphatidylethanolamine (PtdEtn) from phosphatidylserine (PtdSer). This chain is Phosphatidylserine decarboxylase proenzyme, found in Aliivibrio fischeri (strain MJ11) (Vibrio fischeri).